We begin with the raw amino-acid sequence, 134 residues long: ATP synthase epsilon chain (134 aa).

The protein belongs to the ATPase epsilon chain family. In terms of assembly, F-type ATPases have 2 components, CF(1) - the catalytic core - and CF(0) - the membrane proton channel. CF(1) has five subunits: alpha(3), beta(3), gamma(1), delta(1), epsilon(1). CF(0) has three main subunits: a, b and c.

It is found in the cell inner membrane. Its function is as follows. Produces ATP from ADP in the presence of a proton gradient across the membrane. The polypeptide is ATP synthase epsilon chain (Syntrophobacter fumaroxidans (strain DSM 10017 / MPOB)).